The following is a 306-amino-acid chain: Dermonecrotic toxin LiSicTox-alphaIA2ai (306 aa).

The first 18 residues, 1–18, serve as a signal peptide directing secretion; the sequence is MLPYIALILVCWSVLSQA. Residues 19-26 constitute a propeptide that is removed on maturation; sequence AQTDVEGR. His-38 is a catalytic residue. Glu-58 and Asp-60 together coordinate Mg(2+). Residue His-74 is the Nucleophile of the active site. Disulfide bonds link Cys-78–Cys-84 and Cys-80–Cys-223. Residue Asp-118 participates in Mg(2+) binding. Asn-283 carries N-linked (GlcNAc...) asparagine glycosylation.

It belongs to the arthropod phospholipase D family. Class II subfamily. Class IIa sub-subfamily. The cofactor is Mg(2+). As to expression, expressed by the venom gland.

It is found in the secreted. It catalyses the reaction an N-(acyl)-sphingosylphosphocholine = an N-(acyl)-sphingosyl-1,3-cyclic phosphate + choline. It carries out the reaction an N-(acyl)-sphingosylphosphoethanolamine = an N-(acyl)-sphingosyl-1,3-cyclic phosphate + ethanolamine. The catalysed reaction is a 1-acyl-sn-glycero-3-phosphocholine = a 1-acyl-sn-glycero-2,3-cyclic phosphate + choline. The enzyme catalyses a 1-acyl-sn-glycero-3-phosphoethanolamine = a 1-acyl-sn-glycero-2,3-cyclic phosphate + ethanolamine. Its function is as follows. Dermonecrotic toxins cleave the phosphodiester linkage between the phosphate and headgroup of certain phospholipids (sphingolipid and lysolipid substrates), forming an alcohol (often choline) and a cyclic phosphate. This toxin acts on sphingomyelin (SM). It may also act on ceramide phosphoethanolamine (CPE), lysophosphatidylcholine (LPC) and lysophosphatidylethanolamine (LPE), but not on lysophosphatidylserine (LPS), and lysophosphatidylglycerol (LPG). It acts by transphosphatidylation, releasing exclusively cyclic phosphate products as second products. It induces complement-dependent hemolysis, dermonecrosis, vascular permeability and platelet aggregation. This Loxosceles intermedia (Brown spider) protein is Dermonecrotic toxin LiSicTox-alphaIA2ai.